The chain runs to 137 residues: Large ribosomal subunit protein uL16 (137 aa).

It belongs to the universal ribosomal protein uL16 family. Part of the 50S ribosomal subunit.

Functionally, binds 23S rRNA and is also seen to make contacts with the A and possibly P site tRNAs. This chain is Large ribosomal subunit protein uL16, found in Nitratidesulfovibrio vulgaris (strain ATCC 29579 / DSM 644 / CCUG 34227 / NCIMB 8303 / VKM B-1760 / Hildenborough) (Desulfovibrio vulgaris).